The sequence spans 110 residues: MILVTTTPSVDGYTITNYQGIVFGEVVSGVNMFKDLGAGLRNMFGGRSQGYEEELMRARNEAIAEMQRRAEAMGAHAVVGVDIDYEVLGADNGMLMVTASGTAVQISRRA.

It belongs to the UPF0145 family.

This Bifidobacterium longum subsp. infantis (strain ATCC 15697 / DSM 20088 / JCM 1222 / NCTC 11817 / S12) protein is UPF0145 protein Blon_0093/BLIJ_0092.